Reading from the N-terminus, the 497-residue chain is Protein nucleotidyltransferase YdiU (497 aa).

Residues glycine 88, glycine 90, arginine 91, lysine 110, aspartate 122, glycine 123, arginine 173, and arginine 180 each coordinate ATP. Aspartate 249 (proton acceptor) is an active-site residue. Residues asparagine 250 and aspartate 259 each contribute to the Mg(2+) site. Aspartate 259 is an ATP binding site.

Belongs to the SELO family. It depends on Mg(2+) as a cofactor. Mn(2+) serves as cofactor.

It carries out the reaction L-seryl-[protein] + ATP = 3-O-(5'-adenylyl)-L-seryl-[protein] + diphosphate. The enzyme catalyses L-threonyl-[protein] + ATP = 3-O-(5'-adenylyl)-L-threonyl-[protein] + diphosphate. The catalysed reaction is L-tyrosyl-[protein] + ATP = O-(5'-adenylyl)-L-tyrosyl-[protein] + diphosphate. It catalyses the reaction L-histidyl-[protein] + UTP = N(tele)-(5'-uridylyl)-L-histidyl-[protein] + diphosphate. It carries out the reaction L-seryl-[protein] + UTP = O-(5'-uridylyl)-L-seryl-[protein] + diphosphate. The enzyme catalyses L-tyrosyl-[protein] + UTP = O-(5'-uridylyl)-L-tyrosyl-[protein] + diphosphate. In terms of biological role, nucleotidyltransferase involved in the post-translational modification of proteins. It can catalyze the addition of adenosine monophosphate (AMP) or uridine monophosphate (UMP) to a protein, resulting in modifications known as AMPylation and UMPylation. The protein is Protein nucleotidyltransferase YdiU of Methylorubrum extorquens (strain CM4 / NCIMB 13688) (Methylobacterium extorquens).